The sequence spans 195 residues: MNSVHQRRTPFSIADILGPSMVPEAPSAPQLPEAGPDPASPLCALEELASKTFLGHSPRATPQPSEGRAAPEAPPGPGAGVRRRRKSRTAFTAQQVLELERRFVFQKYLAPSERDGLAARLGLANAQVVTWFQNRRAKLKRDVEEMRADVASLCGLSPGVLCYPALPDSTSSPDPGPSGPDSEPNLSDEEIQVDD.

Disordered stretches follow at residues 1–89 (MNSV…KSRT) and 164–195 (PALP…QVDD). Residues 84–143 (RRKSRTAFTAQQVLELERRFVFQKYLAPSERDGLAARLGLANAQVVTWFQNRRAKLKRDV) constitute a DNA-binding region (homeobox). A compositionally biased stretch (acidic residues) spans 186-195 (LSDEEIQVDD).

Expressed in the developing urogenital system, eye and brain.

Its subcellular location is the nucleus. Its function is as follows. Transcription factor. This Mus musculus (Mouse) protein is Transcription factor LBX2 (Lbx2).